The sequence spans 418 residues: Putative ion-transport protein YfeO (418 aa).

12 helical membrane-spanning segments follow: residues 10–30 (LLLS…LIMV), 54–74 (DSPL…GLVI), 99–119 (ALPG…SLGP), 120–140 (EHPI…RLLP), 149–169 (ILAS…AALI), 186–206 (LFAP…FFHP), 223–243 (ILSG…AVWC), 258–278 (VFVL…GGPV), 300–320 (DYFL…ASGF), 322–342 (GGRI…LHEH), 343–363 (VPAV…VLVV), and 371–391 (LFMA…CIVM).

The protein belongs to the chloride channel (TC 2.A.49) family.

The protein localises to the cell membrane. The chain is Putative ion-transport protein YfeO from Escherichia coli O127:H6 (strain E2348/69 / EPEC).